A 289-amino-acid chain; its full sequence is Phosphate import ATP-binding protein PstB (289 aa).

A disordered region spans residues 1-37 (MRSIDRPGGQAARPTIGSVAGASNTRTRDARSLPDTP). Positions 41 to 284 (AAAENFSFYY…PVRRETEDYI (244 aa)) constitute an ABC transporter domain. Residue 73–80 (GPSGCGKS) participates in ATP binding.

The protein belongs to the ABC transporter superfamily. Phosphate importer (TC 3.A.1.7) family. The complex is composed of two ATP-binding proteins (PstB), two transmembrane proteins (PstC and PstA) and a solute-binding protein (PstS).

It is found in the cell inner membrane. The catalysed reaction is phosphate(out) + ATP + H2O = ADP + 2 phosphate(in) + H(+). Its function is as follows. Part of the ABC transporter complex PstSACB involved in phosphate import. Responsible for energy coupling to the transport system. This Aromatoleum aromaticum (strain DSM 19018 / LMG 30748 / EbN1) (Azoarcus sp. (strain EbN1)) protein is Phosphate import ATP-binding protein PstB.